A 928-amino-acid chain; its full sequence is DNA-binding protein RFX6 (928 aa).

Disordered regions lie at residues 1-22 (MAKV…QVSP) and 53-102 (PGGA…AADL). Positions 92–101 (SHDSKTKAAD) are enriched in basic and acidic residues. A DNA-binding region (RFX-type winged-helix) is located at residues 124-199 (TLQWLEENYI…YHYYGIGIKE (76 aa)).

This sequence belongs to the RFX family. As to quaternary structure, interacts with RFX3.

It is found in the nucleus. Transcription factor required to direct islet cell differentiation during endocrine pancreas development. Specifically required for the differentiation of 4 of the 5 islet cell types and for the production of insulin. Not required for pancreatic PP (polypeptide-producing) cells differentiation. Acts downstream of NEUROG3 and regulates the transcription factors involved in beta-cell maturation and function, thereby restricting the expression of the beta-cell differentiation and specification genes, and thus the beta-cell fate choice. Activates transcription by forming a heterodimer with RFX3 and binding to the X-box in the promoter of target genes. Involved in glucose-stimulated insulin secretion by promoting insulin and L-type calcium channel gene transcription. The protein is DNA-binding protein RFX6 (RFX6) of Ailuropoda melanoleuca (Giant panda).